The chain runs to 243 residues: UDP-2,3-diacylglucosamine hydrolase (243 aa).

Mn(2+) contacts are provided by Asp-8, His-10, Asp-41, Asn-79, and His-114. Substrate is bound at residue 79–80; that stretch reads NR. Substrate is bound by residues Asp-122, Lys-164, Lys-167, and His-195. Mn(2+)-binding residues include His-195 and His-197.

Belongs to the LpxH family. Requires Mn(2+) as cofactor.

The protein resides in the cell inner membrane. It carries out the reaction UDP-2-N,3-O-bis[(3R)-3-hydroxytetradecanoyl]-alpha-D-glucosamine + H2O = 2-N,3-O-bis[(3R)-3-hydroxytetradecanoyl]-alpha-D-glucosaminyl 1-phosphate + UMP + 2 H(+). The protein operates within glycolipid biosynthesis; lipid IV(A) biosynthesis; lipid IV(A) from (3R)-3-hydroxytetradecanoyl-[acyl-carrier-protein] and UDP-N-acetyl-alpha-D-glucosamine: step 4/6. Functionally, hydrolyzes the pyrophosphate bond of UDP-2,3-diacylglucosamine to yield 2,3-diacylglucosamine 1-phosphate (lipid X) and UMP by catalyzing the attack of water at the alpha-P atom. Involved in the biosynthesis of lipid A, a phosphorylated glycolipid that anchors the lipopolysaccharide to the outer membrane of the cell. The sequence is that of UDP-2,3-diacylglucosamine hydrolase from Vibrio vulnificus (strain YJ016).